Reading from the N-terminus, the 477-residue chain is Glycogen synthase (477 aa).

An ADP-alpha-D-glucose-binding site is contributed by lysine 15.

Belongs to the glycosyltransferase 1 family. Bacterial/plant glycogen synthase subfamily.

It carries out the reaction [(1-&gt;4)-alpha-D-glucosyl](n) + ADP-alpha-D-glucose = [(1-&gt;4)-alpha-D-glucosyl](n+1) + ADP + H(+). Its pathway is glycan biosynthesis; glycogen biosynthesis. Synthesizes alpha-1,4-glucan chains using ADP-glucose. This chain is Glycogen synthase, found in Salmonella choleraesuis (strain SC-B67).